The primary structure comprises 666 residues: Long chain acyl-CoA synthetase 4 (666 aa).

An ATP-binding site is contributed by 228-239 (IMYTSGTTGDPK). The segment at 495–519 (DGWLHTGDVGEWQPDGSMKIIDRKK) is fatty acid-binding.

This sequence belongs to the ATP-dependent AMP-binding enzyme family. Mg(2+) is required as a cofactor.

The catalysed reaction is a long-chain fatty acid + ATP + CoA = a long-chain fatty acyl-CoA + AMP + diphosphate. The protein operates within lipid metabolism; fatty acid metabolism. In terms of biological role, activation of long-chain fatty acids for both synthesis of cellular lipids, and degradation via beta-oxidation. Preferentially uses palmitate, palmitoleate, oleate and linoleate. In Arabidopsis thaliana (Mouse-ear cress), this protein is Long chain acyl-CoA synthetase 4 (LACS4).